Consider the following 341-residue polypeptide: Ribosomal RNA small subunit methyltransferase C (341 aa).

Belongs to the methyltransferase superfamily. RsmC family. As to quaternary structure, monomer.

Its subcellular location is the cytoplasm. It catalyses the reaction guanosine(1207) in 16S rRNA + S-adenosyl-L-methionine = N(2)-methylguanosine(1207) in 16S rRNA + S-adenosyl-L-homocysteine + H(+). Its function is as follows. Specifically methylates the guanine in position 1207 of 16S rRNA in the 30S particle. This Vibrio parahaemolyticus serotype O3:K6 (strain RIMD 2210633) protein is Ribosomal RNA small subunit methyltransferase C.